We begin with the raw amino-acid sequence, 425 residues long: NAD kinase 2, mitochondrial (425 aa).

A mitochondrion-targeting transit peptide spans 1-45; sequence MDTSAIQQTLVKIYQRQAWQPPRKASKNETTVGKPRELAGGGSPA. The segment at 20-46 is disordered; it reads QPPRKASKNETTVGKPRELAGGGSPAD. Lysine 59 bears the N6-acetyllysine; alternate mark. Position 59 is an N6-succinyllysine; alternate (lysine 59). A Phosphoserine modification is found at serine 171. At lysine 285 the chain carries N6-succinyllysine. At lysine 300 the chain carries N6-acetyllysine; alternate. At lysine 300 the chain carries N6-succinyllysine; alternate. Serine 350 carries the post-translational modification Phosphoserine. Residue lysine 380 is modified to N6-acetyllysine.

Belongs to the NAD kinase family. Homodimer.

The protein localises to the mitochondrion. It carries out the reaction NAD(+) + ATP = ADP + NADP(+) + H(+). Its activity is regulated as follows. Inhibited by NADH, NADPH and NADP(+). Mitochondrial NAD(+) kinase that phosphorylates NAD(+) to yield NADP(+). Can use both ATP or inorganic polyphosphate as the phosphoryl donor. This is NAD kinase 2, mitochondrial (Nadk2) from Rattus norvegicus (Rat).